The chain runs to 354 residues: Inactive ADP-ribosyltransferase ARH2 (354 aa).

Ser27 carries the post-translational modification Phosphoserine.

Belongs to the ADP-ribosylglycohydrolase family.

It is found in the cytoplasm. Its subcellular location is the myofibril. The protein localises to the sarcomere. Its function is as follows. Required for myofibril assembly and outgrowth of the cardiac chambers in the developing heart. Appears to be catalytically inactive, showing no activity against O-acetyl-ADP-ribose. This chain is Inactive ADP-ribosyltransferase ARH2 (ADPRHL1), found in Bos taurus (Bovine).